The following is an 806-amino-acid chain: Facilitated trehalose transporter Tret1 (806 aa).

2 disordered regions span residues 1–34 and 48–138; these read MFGN…TTGT and LNST…HKNQ. The Cytoplasmic portion of the chain corresponds to 1–339; that stretch reads MFGNEMDDTR…LEVYRPTTNP (339 aa). Low complexity predominate over residues 25 to 34; the sequence is GSLSTSTTGT. A helical transmembrane segment spans residues 340–360; it reads IFIWTQVLAALSVSLGSMVVG. At 361-389 the chain is on the extracellular side; that stretch reads FSSAYTSPALVSMKDRNITSFEVTDQSGS. Asn377 is a glycosylation site (N-linked (GlcNAc...) asparagine). Residues 390–410 form a helical membrane-spanning segment; that stretch reads WVGGIMPLAGLAGGILGGPLI. The Cytoplasmic portion of the chain corresponds to 411–424; the sequence is EYLGRKNTILATAT. The chain crosses the membrane as a helical span at residues 425–445; it reads PFIISWLLIACATHVAMVLVG. Residues 446–447 are Extracellular-facing; sequence RA. The chain crosses the membrane as a helical span at residues 448-468; that stretch reads LSGFSVGVASLSLPVYLGETV. Topologically, residues 469–473 are cytoplasmic; the sequence is QPEVR. Residues 474–494 traverse the membrane as a helical segment; the sequence is GTLGLLPTAFGNIGILLCFVA. At 495 to 501 the chain is on the extracellular side; it reads GKYMDWS. Residues 502-522 traverse the membrane as a helical segment; that stretch reads GLAFLGAALPIPFLLLMFLIP. Residues 523-585 lie on the Cytoplasmic side of the membrane; the sequence is ETPRWYVSRG…DLMKKANLKP (63 aa). A helical membrane pass occupies residues 586–606; sequence LLISLGLMFFQQLSGINAVIF. Residues 607–622 are Extracellular-facing; the sequence is YTVQIFQDAGSTIDEN. Residues 623–643 traverse the membrane as a helical segment; that stretch reads LCTIIVGVVNFIATFIATMLI. At 644 to 649 the chain is on the cytoplasmic side; sequence DRLGRK. The chain crosses the membrane as a helical span at residues 650-670; sequence MLLYISDVAMIITLMTLGGFF. At 671–681 the chain is on the extracellular side; sequence YVKNSGQDVSQ. The helical transmembrane segment at 682–702 threads the bilayer; sequence VGWLPLAAFVIYVLGFSLGFG. Residues 703–723 are Cytoplasmic-facing; the sequence is PIPWLMMGEILPGKIRGSAAS. Residues 724–744 traverse the membrane as a helical segment; sequence VATAFNWSCTFIVTKTFADII. The Extracellular segment spans residues 745–750; it reads NAIGTH. A helical transmembrane segment spans residues 751-771; that stretch reads GTFWMFGSICVIGLAFVIFYV. The Cytoplasmic portion of the chain corresponds to 772–806; that stretch reads PETQGKSLEDIERKMMGRVRRMSSVANIKPLSFNM.

This sequence belongs to the major facilitator superfamily. Sugar transporter (TC 2.A.1.1) family. Trehalose transporter subfamily.

The protein localises to the cell membrane. In terms of biological role, high-capacity facilitative transporter for trehalose. Does not transport maltose, sucrose or lactose. Mediates the bidirectional transfer of trehalose. Responsible for the transport of trehalose synthesized in the fat body and the incorporation of trehalose into other tissues that require a carbon source, thereby regulating trehalose levels in the hemolymph. This Aedes aegypti (Yellowfever mosquito) protein is Facilitated trehalose transporter Tret1.